Consider the following 318-residue polypeptide: Ribose-phosphate pyrophosphokinase 2 (318 aa).

96-101 (RQDKKD) serves as a coordination point for ATP. Mg(2+) is bound by residues Asp128, His130, Asp139, and Asp143. His130 provides a ligand contact to ATP. The binding of phosphoribosylpyrophosphate stretch occupies residues 212-227 (KDRVAILVDDMADTCG).

Belongs to the ribose-phosphate pyrophosphokinase family. Homodimer. The active form is probably a hexamer composed of 3 homodimers. The cofactor is Mg(2+).

The enzyme catalyses D-ribose 5-phosphate + ATP = 5-phospho-alpha-D-ribose 1-diphosphate + AMP + H(+). It functions in the pathway metabolic intermediate biosynthesis; 5-phospho-alpha-D-ribose 1-diphosphate biosynthesis; 5-phospho-alpha-D-ribose 1-diphosphate from D-ribose 5-phosphate (route I): step 1/1. Its activity is regulated as follows. Activated by magnesium and inorganic phosphate. Competitively or non-competitively inhibited by ADP, 2,3-bisphosphoglyceride or GDP. Its function is as follows. Catalyzes the synthesis of phosphoribosylpyrophosphate (PRPP) that is essential for nucleotide synthesis. This chain is Ribose-phosphate pyrophosphokinase 2 (PRPS2), found in Homo sapiens (Human).